Reading from the N-terminus, the 239-residue chain is Probable transcriptional regulatory protein RBAM_007230 (239 aa).

The protein belongs to the TACO1 family. YeeN subfamily.

The protein localises to the cytoplasm. This is Probable transcriptional regulatory protein RBAM_007230 from Bacillus velezensis (strain DSM 23117 / BGSC 10A6 / LMG 26770 / FZB42) (Bacillus amyloliquefaciens subsp. plantarum).